A 352-amino-acid polypeptide reads, in one-letter code: Protein-glutamate methylesterase/protein-glutamine glutaminase 2 (352 aa).

The region spanning 6-124 (KVLIVEDSLV…NAGYDTMAAK (119 aa)) is the Response regulatory domain. Residue aspartate 57 is modified to 4-aspartylphosphate. Residues 162–343 (PGTYSMVGIV…LPLPAIAARL (182 aa)) enclose the CheB-type methylesterase domain. Residues serine 173, histidine 200, and aspartate 292 contribute to the active site.

It belongs to the CheB family. In terms of processing, phosphorylated by CheA. Phosphorylation of the N-terminal regulatory domain activates the methylesterase activity.

The protein localises to the cytoplasm. The enzyme catalyses [protein]-L-glutamate 5-O-methyl ester + H2O = L-glutamyl-[protein] + methanol + H(+). It catalyses the reaction L-glutaminyl-[protein] + H2O = L-glutamyl-[protein] + NH4(+). Functionally, involved in chemotaxis. Part of a chemotaxis signal transduction system that modulates chemotaxis in response to various stimuli. Catalyzes the demethylation of specific methylglutamate residues introduced into the chemoreceptors (methyl-accepting chemotaxis proteins or MCP) by CheR. Also mediates the irreversible deamidation of specific glutamine residues to glutamic acid. The chain is Protein-glutamate methylesterase/protein-glutamine glutaminase 2 from Paramagnetospirillum magneticum (strain ATCC 700264 / AMB-1) (Magnetospirillum magneticum).